The chain runs to 140 residues: Transcription antitermination protein NusB (140 aa).

It belongs to the NusB family.

Its function is as follows. Involved in transcription antitermination. Required for transcription of ribosomal RNA (rRNA) genes. Binds specifically to the boxA antiterminator sequence of the ribosomal RNA (rrn) operons. The polypeptide is Transcription antitermination protein NusB (Pseudothermotoga lettingae (strain ATCC BAA-301 / DSM 14385 / NBRC 107922 / TMO) (Thermotoga lettingae)).